The primary structure comprises 317 residues: Probable deoxyhypusine synthase 1 (317 aa).

Lys285 serves as the catalytic Nucleophile.

Belongs to the deoxyhypusine synthase family. Requires NAD(+) as cofactor.

The enzyme catalyses [eIF5A protein]-L-lysine + spermidine = [eIF5A protein]-deoxyhypusine + propane-1,3-diamine. Its pathway is protein modification; eIF5A hypusination. Its function is as follows. Catalyzes the NAD-dependent oxidative cleavage of spermidine and the subsequent transfer of the butylamine moiety of spermidine to the epsilon-amino group of a specific lysine residue of the eIF-5A precursor protein to form the intermediate deoxyhypusine residue. In Methanosarcina mazei (strain ATCC BAA-159 / DSM 3647 / Goe1 / Go1 / JCM 11833 / OCM 88) (Methanosarcina frisia), this protein is Probable deoxyhypusine synthase 1 (dys1).